The chain runs to 509 residues: Maturase K (509 aa).

Belongs to the intron maturase 2 family. MatK subfamily.

The protein resides in the plastid. Functionally, usually encoded in the trnK tRNA gene intron. Probably assists in splicing its own and other chloroplast group II introns. The polypeptide is Maturase K (Castilleja linariifolia (Wyoming Indian paintbrush)).